Consider the following 535-residue polypeptide: Solute carrier family 22 member 7 (535 aa).

12 helical membrane-spanning segments follow: residues 21–41, 144–164, 178–198, 202–222, 232–252, 257–277, 344–364, 375–395, 402–422, 429–449, 464–484, and 489–509; these read LVLM…PVFM, ITST…GYLS, VSSL…MFVV, LTGS…LEWL, VIST…GYLI, WLLL…WWVP, ISLC…GLTL, QTQL…YFLV, LTEA…LLVS, ITAL…TAYL, LGLT…AALL, and LLLP…TALL.

It belongs to the major facilitator (TC 2.A.1) superfamily. Organic cation transporter (TC 2.A.1.19) family. As to expression, expressed in liver and kidney. Expressed at low levels in adipose tissue. Expressed in fetal liver. In kidney, expressed at the brush border of the proximal tubule S3 segment (S3) in the outer stripe and medullary rays. In kidney, expression is higher in female than male.

Its subcellular location is the basolateral cell membrane. The protein localises to the apical cell membrane. It localises to the cell membrane. The enzyme catalyses orotate(out) + L-glutamate(in) = orotate(in) + L-glutamate(out). It catalyses the reaction 3',5'-cyclic GMP(in) = 3',5'-cyclic GMP(out). The catalysed reaction is GMP(in) = GMP(out). It carries out the reaction 2'-deoxyguanosine(in) = 2'-deoxyguanosine(out). The enzyme catalyses GDP(in) = GDP(out). It catalyses the reaction guanosine(in) = guanosine(out). The catalysed reaction is GTP(in) = GTP(out). It carries out the reaction 3',5'-cyclic AMP(in) = 3',5'-cyclic AMP(out). The enzyme catalyses creatinine(in) = creatinine(out). It catalyses the reaction prostaglandin E2(out) = prostaglandin E2(in). The catalysed reaction is 2-oxoglutarate(in) = 2-oxoglutarate(out). It carries out the reaction glutarate(in) = glutarate(out). The enzyme catalyses urate(out) = urate(in). It catalyses the reaction estrone 3-sulfate(out) = estrone 3-sulfate(in). Functionally, functions as a Na(+)-independent bidirectional multispecific transporter. Contributes to the renal and hepatic elimination of endogenous organic compounds from the systemic circulation into the urine and bile, respectively. Capable of transporting a wide range of purine and pyrimidine nucleobases, nucleosides, and nucleotides with cGMP, 2'deoxyguanosine and GMP being the preferred substrates. Functions as a pH- and chloride-independent cGMP bidirectional facilitative transporter that can regulate both intracellular and extracellular levels of cGMP and may be involved in cGMP signaling pathways. Mediates orotate/glutamate bidirectional exchange and most likely display a physiological role in hepatic release of glutamate into the blood. Involved in renal secretion and possible reabsorption of creatinine. Able to uptake prostaglandin E2 (PGE2) and may contribute to PGE2 renal excretion. Also transports alpha-ketoglutarate and urate. Apart from the orotate/glutamate exchange, the counterions for the uptake of other SLC22A7/OAT2 substrates remain to be identified. This Rattus norvegicus (Rat) protein is Solute carrier family 22 member 7.